Reading from the N-terminus, the 390-residue chain is Protein PIN-LIKES 3 (390 aa).

At 1–14 (MVKLLELFITSSKP) the chain is on the lumenal side. The helical transmembrane segment at 15-35 (VVEILLITSVGFYMALDGVNL) threads the bilayer. Residues 36–43 (LGHDARKY) are Cytoplasmic-facing. A helical membrane pass occupies residues 44–61 (LNNIVFYVFSPSLIGSRL). Over 62-76 (ADSVTYESLVKMWFM) the chain is Lumenal. A helical membrane pass occupies residues 77–97 (PVNVLLTFIIGSLLGWIVIVI). The Cytoplasmic segment spans residues 98-107 (TKPPSHLRGL). The helical transmembrane segment at 108 to 128 (ILGCCAAGNLGNMPLIIIPAV) threads the bilayer. Residues 129–144 (CKEKGGPFGDPESCQK) are Lumenal-facing. A helical membrane pass occupies residues 145 to 165 (YGMGYVALSMAMGSIYIWTYV). Residues 166–227 (YNLMRVLSNS…SLSQKVNLKT (62 aa)) lie on the Cytoplasmic side of the membrane. A helical transmembrane segment spans residues 228 to 248 (IFAPSTIAAMIALVIGLITPL). The Lumenal segment spans residues 249 to 265 (RKLIIGTEAPLRVLQDS). The helical transmembrane segment at 266 to 286 (VTLVGDGAVPAMTMIIGGNLL) threads the bilayer. Topologically, residues 287 to 297 (KGLRSSGMKMS) are cytoplasmic. Residues 298-318 (SIIGVLVARYVLLPMSGVLIV) traverse the membrane as a helical segment. The Lumenal segment spans residues 319–331 (RGAYKLDLVTSEP). The chain crosses the membrane as a helical span at residues 332 to 352 (LYQFVLLLQYAVPPAMNLGTI). Residues 353–364 (TQLFGTGESECS) lie on the Cytoplasmic side of the membrane. A helical transmembrane segment spans residues 365 to 385 (VIMLWTYSLASIALTVWPTFF). The Lumenal portion of the chain corresponds to 386-390 (MWLVA).

It belongs to the auxin efflux carrier (TC 2.A.69.2) family. As to expression, expressed in seedlings, rosette and cauline leaves, flowers and siliques.

The protein resides in the endoplasmic reticulum membrane. Functionally, involved in cellular auxin homeostasis by regulating auxin metabolism. Regulates intracellular auxin accumulation at the endoplasmic reticulum and thus auxin availability for nuclear auxin signaling. This chain is Protein PIN-LIKES 3 (PILS3), found in Arabidopsis thaliana (Mouse-ear cress).